The chain runs to 237 residues: MQKQAELYRGKAKTVYSTENPDLLVLEFRNDTSAGDGARIEKFDRKGMVNNKFNHFIMTKLAEAGIPTQMERLLSDTECLVKKLEMVPVECVVRNRAAGSLVKRLGVEEGMELNPPIFDLFLKNDALHDPMVNSSYCETFGWVSQENLARMKALTYKANDVLKKLFDDAGLILVDFKLEFGLYKGEVVLGDEFSPDGSRLWDKETLDKMDKDRFRQSLGGLIEAYEAVARRLGVKLD.

Belongs to the SAICAR synthetase family.

The catalysed reaction is 5-amino-1-(5-phospho-D-ribosyl)imidazole-4-carboxylate + L-aspartate + ATP = (2S)-2-[5-amino-1-(5-phospho-beta-D-ribosyl)imidazole-4-carboxamido]succinate + ADP + phosphate + 2 H(+). Its pathway is purine metabolism; IMP biosynthesis via de novo pathway; 5-amino-1-(5-phospho-D-ribosyl)imidazole-4-carboxamide from 5-amino-1-(5-phospho-D-ribosyl)imidazole-4-carboxylate: step 1/2. In Salmonella arizonae (strain ATCC BAA-731 / CDC346-86 / RSK2980), this protein is Phosphoribosylaminoimidazole-succinocarboxamide synthase.